The chain runs to 546 residues: Cysteine desulfurase SufS (546 aa).

The N-terminal stretch at 1-22 is a signal peptide; it reads MLRGPRCLYIYLFFVFLPFSFC. N6-(pyridoxal phosphate)lysine is present on Lys-291. Cys-497 serves as the catalytic Cysteine persulfide intermediate.

This sequence belongs to the class-V pyridoxal-phosphate-dependent aminotransferase family. Csd subfamily. In terms of assembly, monomer. Interacts with SufE; interaction enhances cysteine desulfurase activity of SufS. Pyridoxal 5'-phosphate serves as cofactor. Post-translationally, proteolytically cleaved.

It localises to the plastid. Its subcellular location is the apicoplast. The catalysed reaction is (sulfur carrier)-H + L-cysteine = (sulfur carrier)-SH + L-alanine. Its pathway is cofactor biosynthesis; iron-sulfur cluster biosynthesis. Functionally, catalyzes sulfur activation and mobilization in sulfur mobilization (SUF) pathway for iron-sulfur (Fe-S) cluster biogenesis. Active when in complex with a partner protein SufE. Required for apicoplast maintenance. Plays a role in the development of sporozoites in oocysts in mosquitoes. May provide sulfur for MNMA-mediated tRNA modifications. In Plasmodium falciparum (isolate 3D7), this protein is Cysteine desulfurase SufS.